Reading from the N-terminus, the 420-residue chain is 2',3'-cyclic-nucleotide 3'-phosphodiesterase (420 aa).

Ser-9 is modified (phosphoserine). Tyr-110 carries the post-translational modification Phosphotyrosine. Ser-169, Ser-227, and Ser-239 each carry phosphoserine. His-250 acts as the Proton acceptor in catalysis. Thr-252 contacts substrate. The active-site Proton donor is His-329. Thr-331 serves as a coordination point for substrate. At Ser-358 the chain carries Phosphoserine. Cys-417 carries the cysteine methyl ester modification. Cys-417 is lipidated: S-farnesyl cysteine. Positions 418–420 (TII) are cleaved as a propeptide — removed in mature form.

Belongs to the 2H phosphoesterase superfamily. CNPase family. Exists as monomers and homodimers.

It is found in the membrane. Its subcellular location is the melanosome. It carries out the reaction a nucleoside 2',3'-cyclic phosphate + H2O = a nucleoside 2'-phosphate + H(+). Its function is as follows. Catalyzes the formation of 2'-nucleotide products from 2',3'-cyclic substrates. May participate in RNA metabolism in the myelinating cell, CNP is the third most abundant protein in central nervous system myelin. This chain is 2',3'-cyclic-nucleotide 3'-phosphodiesterase, found in Mus musculus (Mouse).